The sequence spans 244 residues: Ribonuclease PH (244 aa).

Residues R90 and G128–R130 contribute to the phosphate site.

The protein belongs to the RNase PH family. In terms of assembly, homohexameric ring arranged as a trimer of dimers.

It carries out the reaction tRNA(n+1) + phosphate = tRNA(n) + a ribonucleoside 5'-diphosphate. Phosphorolytic 3'-5' exoribonuclease that plays an important role in tRNA 3'-end maturation. Removes nucleotide residues following the 3'-CCA terminus of tRNAs; can also add nucleotides to the ends of RNA molecules by using nucleoside diphosphates as substrates, but this may not be physiologically important. Probably plays a role in initiation of 16S rRNA degradation (leading to ribosome degradation) during starvation. The chain is Ribonuclease PH from Prochlorococcus marinus (strain MIT 9313).